The sequence spans 1099 residues: MLESLNRRNSIDSNQADNDNDNDNHSNDELSPSELYYSPSGSPPKSQLLLRKSSSPSSYSPIKSDLPNIYSHLRSNDSESPPQPSPKQQSSLSSSSSSSSSSNTKSSTTKNIFKKLLRINKSSDNIDESRSIVSNNGGSPMSDSTTVTSTLSTDTAPKRGKSIQRSQILHHTDSDSLYLENQIELRPEISKSIGNIKIPSIFTNDGMPLLKISHKSKKRILFWIDPSCFKFSWRMANSTTTTTSATTSATTSGLPQGITNTTALSNSAIISTPAIATSAIHRLSITNRTTHEFVLDDIKSIYIQNEGSGYREELNISQKLEKNWITIIYFNHKKNSLKSLHLITDNDHDFKKLISAIYNLKQLRSQLAKEFLIDLNELDENYVKMLLNKELLAGDNGNVDGNEVDIRKSHKHVREFLSFNDILKYSKRLNINVNTNHLQQIFDQVLLLSSATTEKPVSTPLFEKGLNFEQFKQFVSILKDRKDLQEIWDSLAQGKEVLQFDEIKNFIINIQKENFSDDDDNSTINLIFQKYCSNDNGWNKESLNEYLLSSYSTPYREITQTQTNYYDYPLNEYFISSSHNTYLTGRQVAGDSSVEGYIRTLQRGCRCVEIDIWNGDSNTTTTTVIGTKDDDDKNEYEPIVNHGRTFTKPISFANVIRAIKKFAFIVSPWPLILSLEIHCSPECQIKVVNILKDILGENMIIAPIDIDSVILPSPAELKHKFIIKVKKTTSFQNLIETENGSFTTSTTTTTTTTTTTTTATSLSEDNENNKSNSSSTSSFIIRRRKNKSPKIINELSNLGIYTQGIKFRNFSLPESKTFNHCFSLGEKSINRMIKDDDKKISLDKHNRRYLMRVYPSGTRLKSSNFNPLPYWSHGVQMVATNWQTYDLGQQLNEALFENKIFQGYVLKPSVLRKPTLKSSSSNVDTRTSLTTTNSKTIRFNFEIISGHQLPKFPKDDYKDQAINPYISFEIIGAQDVQWDNNDSSPIAPTTSSSPFIRTTKIIRENGFNPNFNTKFSGSIITTTNDLIFIKFVVYASTSLNYPDYGENFPIAILVTKLNYLKQGYRYIYLNDLLGEQLVYSSIFIKIEYDEDLLNEFINK.

The segment covering 1-10 (MLESLNRRNS) has biased composition (basic and acidic residues). Disordered regions lie at residues 1-109 (MLES…SSTT) and 128-164 (ESRSIVSNNGGSPMSDSTTVTSTLSTDTAPKRGKSIQ). Low complexity-rich tracts occupy residues 43-66 (PPKSQLLLRKSSSPSSYSPIKSDL) and 86-109 (PKQQSSLSSSSSSSSSSNTKSSTT). Residues 131-141 (SIVSNNGGSPM) are compositionally biased toward polar residues. The span at 142–155 (SDSTTVTSTLSTDT) shows a compositional bias: low complexity. The region spanning 566–726 (YDYPLNEYFI…LKHKFIIKVK (161 aa)) is the PI-PLC X-box domain. Residues histidine 579 and histidine 642 contribute to the active site. Residues lysine 724 and lysine 726 each contribute to the substrate site. Residues 742–780 (FTTSTTTTTTTTTTTTTATSLSEDNENNKSNSSSTSSFI) form a disordered region. The segment covering 743 to 778 (TTSTTTTTTTTTTTTTATSLSEDNENNKSNSSSTSS) has biased composition (low complexity). Residues 794-912 (ELSNLGIYTQ…GYVLKPSVLR (119 aa)) form the PI-PLC Y-box domain. The substrate site is built by serine 823 and arginine 852. A C2 domain is found at 917-1071 (KSSSSNVDTR…QGYRYIYLND (155 aa)).

It catalyses the reaction a 1,2-diacyl-sn-glycero-3-phospho-(1D-myo-inositol-4,5-bisphosphate) + H2O = 1D-myo-inositol 1,4,5-trisphosphate + a 1,2-diacyl-sn-glycerol + H(+). The production of the second messenger molecules diacylglycerol (DAG) and inositol 1,4,5-trisphosphate (IP3) is mediated by activated phosphatidylinositol-specific phospholipase C enzymes. The polypeptide is 1-phosphatidylinositol 4,5-bisphosphate phosphodiesterase 1 (PLC1) (Candida albicans (Yeast)).